The following is a 258-amino-acid chain: Large ribosomal subunit protein uL15c (258 aa).

A chloroplast-targeting transit peptide spans 1 to 65 (MSAASLIPVS…NVKSSGENVR (65 aa)). Residues 67 to 90 (RLDNLGPQPGSRKRPKRKGRGIAA) form a disordered region. The segment covering 77–86 (SRKRPKRKGR) has biased composition (basic residues).

This sequence belongs to the universal ribosomal protein uL15 family. As to quaternary structure, part of the 50S ribosomal subunit.

The protein resides in the plastid. It localises to the chloroplast. In Pisum sativum (Garden pea), this protein is Large ribosomal subunit protein uL15c (RPL15).